A 367-amino-acid chain; its full sequence is Mitogen-activated protein kinase 12 (367 aa).

Residues 27 to 311 (YQDLQPVGSG…AAEALTHPYF (285 aa)) enclose the Protein kinase domain. ATP-binding positions include 33–41 (VGSGAYGAV) and K56. The active-site Proton acceptor is D153. A Phosphothreonine modification is found at T183. The TXY motif lies at 183–185 (TGY). At Y185 the chain carries Phosphotyrosine.

Belongs to the protein kinase superfamily. CMGC Ser/Thr protein kinase family. MAP kinase subfamily. Monomer. Interacts with the PDZ domain of the syntrophin SNTA1. Interacts with SH3BP5, LIN7C, SCRIB and SYNJ2BP. Interacts with PTPN4; this interaction induces the activation of PTPN4 phosphatase activity. Requires Mg(2+) as cofactor. Dually phosphorylated on Thr-183 and Tyr-185 by MAP2K3/MKK3 and MAP2K6/MKK6, which activates the enzyme. In terms of processing, ubiquitinated. Ubiquitination leads to degradation by the proteasome pathway. In terms of tissue distribution, highly expressed in skeletal muscle. Also expressed in the heart, particularly in cardiac myocytes, lung, thymus and testes.

It localises to the cytoplasm. The protein localises to the nucleus. It is found in the mitochondrion. It carries out the reaction L-seryl-[protein] + ATP = O-phospho-L-seryl-[protein] + ADP + H(+). The enzyme catalyses L-threonyl-[protein] + ATP = O-phospho-L-threonyl-[protein] + ADP + H(+). Activated by phosphorylation on threonine and tyrosine. MAP2K3/MKK3 and MAP2K6/MKK6 are both essential for the activation of MAPK12 induced by environmental stress, whereas MAP2K6/MKK6 is the major MAPK12 activator in response to TNF-alpha. Functionally, serine/threonine kinase which acts as an essential component of the MAP kinase signal transduction pathway. MAPK12 is one of the four p38 MAPKs which play an important role in the cascades of cellular responses evoked by extracellular stimuli such as pro-inflammatory cytokines or physical stress leading to direct activation of transcription factors such as ELK1 and ATF2. Accordingly, p38 MAPKs phosphorylate a broad range of proteins and it has been estimated that they may have approximately 200 to 300 substrates each. Some of the targets are downstream kinases such as MAPKAPK2, which are activated through phosphorylation and further phosphorylate additional targets. Plays a role in myoblast differentiation and also in the down-regulation of cyclin D1 in response to hypoxia in adrenal cells suggesting MAPK12 may inhibit cell proliferation while promoting differentiation. Phosphorylates DLG1. Following osmotic shock, MAPK12 in the cell nucleus increases its association with nuclear DLG1, thereby causing dissociation of DLG1-SFPQ complexes. This function is independent of its catalytic activity and could affect mRNA processing and/or gene transcription to aid cell adaptation to osmolarity changes in the environment. Regulates UV-induced checkpoint signaling and repair of UV-induced DNA damage and G2 arrest after gamma-radiation exposure. MAPK12 is involved in the regulation of SLC2A1 expression and basal glucose uptake in L6 myotubes; and negatively regulates SLC2A4 expression and contraction-mediated glucose uptake in adult skeletal muscle. C-Jun (JUN) phosphorylation is stimulated by MAPK14 and inhibited by MAPK12, leading to a distinct AP-1 regulation. MAPK12 is required for the normal kinetochore localization of PLK1, prevents chromosomal instability and supports mitotic cell viability. MAPK12-signaling is also positively regulating the expansion of transient amplifying myogenic precursor cells during muscle growth and regeneration. The protein is Mitogen-activated protein kinase 12 (Mapk12) of Mus musculus (Mouse).